The primary structure comprises 284 residues: MTKDYQDFQHLDNDNDHHQLRRGPPPTPRLLQRLCSGSRLLLLSSSLSILLLVVVCVITSQNSQLREDLLALRQNFSNLTVSTEDQVKALSTQGSSVGRKMKLVESKLEKQQKDLTEDHSSLLLHVKQLVSDVRSLSCQMAAFRGNGSERTCCPINWVEYEGSCYWFSSSVRPWTEADKYCQLENAHLVVVTSRDEQNFLQRHMGPLNTWIGLTDQNGPWKWVDGTDYETGFQNWRPEQPDNWYGHGLGGGEDCAHFTTDGRWNDDVCRRPYRWVCETKLDKAN.

Positions 1–18 are enriched in basic and acidic residues; sequence MTKDYQDFQHLDNDNDHH. Positions 1-25 are disordered; the sequence is MTKDYQDFQHLDNDNDHHQLRRGPP. Topologically, residues 1 to 39 are cytoplasmic; sequence MTKDYQDFQHLDNDNDHHQLRRGPPPTPRLLQRLCSGSR. Residues 5–8 carry the Endocytosis signal motif; it reads YQDF. Residue cysteine 35 is the site of S-palmitoyl cysteine attachment. The helical; Signal-anchor for type II membrane protein transmembrane segment at 40–60 threads the bilayer; it reads LLLLSSSLSILLLVVVCVITS. Positions 59–117 form a coiled coil; that stretch reads TSQNSQLREDLLALRQNFSNLTVSTEDQVKALSTQGSSVGRKMKLVESKLEKQQKDLTE. Residues 61–284 lie on the Extracellular side of the membrane; that stretch reads QNSQLREDLL…VCETKLDKAN (224 aa). Residues asparagine 75, asparagine 78, and asparagine 146 are each glycosylated (N-linked (GlcNAc...) asparagine). Intrachain disulfides connect cysteine 153/cysteine 164, cysteine 181/cysteine 276, and cysteine 254/cysteine 268. The 118-residue stretch at 160–277 folds into the C-type lectin domain; that stretch reads YEGSCYWFSS…CRRPYRWVCE (118 aa). The Ca(2+) site is built by valine 190, glutamate 196, aspartate 215, glutamine 239, aspartate 241, glutamate 252, aspartate 253, asparagine 264, aspartate 265, and glutamate 277.

Interacts with LASS2. In terms of processing, phosphorylated on a cytoplasmic Ser residue. As to expression, expressed exclusively in hepatic parenchymal cells.

The protein resides in the membrane. Mediates the endocytosis of plasma glycoproteins to which the terminal sialic acid residue on their complex carbohydrate moieties has been removed. The receptor recognizes terminal galactose and N-acetylgalactosamine units. After ligand binding to the receptor, the resulting complex is internalized and transported to a sorting organelle, where receptor and ligand are disassociated. The receptor then returns to the cell membrane surface. The protein is Asialoglycoprotein receptor 1 (Asgr1) of Mus musculus (Mouse).